The following is a 272-amino-acid chain: 27-O-demethylrifamycin SV methyltransferase (272 aa).

Residues serine 89, glutamine 94, 117–118 (DA), leucine 134, and histidine 139 contribute to the S-adenosyl-L-methionine site.

This sequence belongs to the class I-like SAM-binding methyltransferase superfamily. In terms of assembly, exists probably as a trimer.

The enzyme catalyses 27-O-demethylrifamycin SV + S-adenosyl-L-methionine = rifamycin SV + S-adenosyl-L-homocysteine + H(+). Its pathway is antibiotic biosynthesis; rifamycin B biosynthesis. With respect to regulation, slightly inhibited by Ca(2+) and Mg(2+). Strongly inhibited by Zn(2+), Ni(2+) and Co(2+). Its function is as follows. Catalyzes the methylation of 27-O-demethylrifamycin SV (DMRSV) to rifamycin SV. The sequence is that of 27-O-demethylrifamycin SV methyltransferase from Amycolatopsis mediterranei (strain S699) (Nocardia mediterranei).